A 473-amino-acid polypeptide reads, in one-letter code: FAD-dependent urate hydroxylase (473 aa).

The protein belongs to the HpyO family. In terms of assembly, homodimer. FAD is required as a cofactor.

The catalysed reaction is urate + NADH + O2 + H(+) = 5-hydroxyisourate + NAD(+) + H2O. It carries out the reaction urate + NADPH + O2 + H(+) = 5-hydroxyisourate + NADP(+) + H2O. It functions in the pathway purine metabolism; urate degradation. Its function is as follows. Catalyzes the hydroxylation of urate to 5-hydroxyisourate (HIU). Is likely to be involved in the urate degradation pathway to allantoin. Is slightly more efficient (about 2.6 times) with NADPH than NADH as the electron donor. This chain is FAD-dependent urate hydroxylase, found in Xanthomonas campestris pv. campestris (strain ATCC 33913 / DSM 3586 / NCPPB 528 / LMG 568 / P 25).